The chain runs to 1093 residues: Non-canonical non-ribosomal peptide synthetase ascB (1093 aa).

Residues 1 to 26 (MTVNGHHTNGVNGANGTNGHANGSNG) are compositionally biased toward low complexity. The interval 1 to 27 (MTVNGHHTNGVNGANGTNGHANGSNGI) is disordered. The interval 35–392 (EIVPFVKPQV…LSLTFAPTDN (358 aa)) is adenylation (A) domain. Positions 591–678 (DNLEQNLKSL…EIAAALTKGS (88 aa)) constitute a Carrier domain. At Ser627 the chain carries O-(pantetheine 4'-phosphoryl)serine. A thioester reductase (TR) domain region spans residues 721–971 (LTGATGSLGS…IPVDDAASTV (251 aa)).

The protein belongs to the NRP synthetase family.

The catalysed reaction is ilicicolinate B + AH2 + ATP = ilicicolin B + A + AMP + diphosphate. It functions in the pathway secondary metabolite biosynthesis; terpenoid biosynthesis. Functionally, non-canonical non-ribosomal peptide synthetase; part of the asc-1 gene cluster that mediates the biosynthesis of both ascochlorin and ascofuranone, a strong inhibitor of cyanide-insensitive alternative oxidases and a promising drug candidate against African trypanosomiasis. The first step in the pathway is performed by the non-reducing polyketide synthase ascC that produces orsellinic acid by condensing acetyl-CoA with 3 malonyl-CoA units. Orsellinic acid is then prenylated by the prenyltransferase ascA to yield ilicicolinic acid B. Ilicicolinic acid B is further reduced to ilicicolin B by the reductase ascB. The halogenase ascD then chlorinates ilicicolin B to produce ilicicolin A which is converted to ilicicolin A epoxide by the cytochrome P450 monooxygenase ascE that catalyzes stereoselective epoxidation of the terminal double bond of the prenyl group. Ilicicolin A epoxide is the last common precursor for the biosynthesis of ascofuranone and ascochlorin. The terpene cyclase ascF produces a monocyclic terpene, and the cyclization reaction is proposed to be initiated by protonation of the terminal epoxide of ilicicolin A epoxide to generate a monocyclic tertiarycation, which is followed by a series of hydride and methyl shifts with abstraction of proton, leading to the formation of the (14S,15R,19R)-trimethylcyclohexanone ring structure of ilicicolin C, which is finally reduced to ascochlorin by the dehydrogenase ascG. On the other hand, ilicicolin A epoxide is hydroxylated by the cytochrome P450 monooxygenase ascH, and the resultant product is cyclized by the terpene cyclase ascI to ascofuranol via protonation-initiated epoxide ring opening, which facilitates the 6-endo-tet cyclization to form the tetrahy-drofuran ring. Finally, ascofuranol is oxidized into ascofuranone by ascJ. The protein is Non-canonical non-ribosomal peptide synthetase ascB of Acremonium egyptiacum (Oospora egyptiaca).